Here is a 515-residue protein sequence, read N- to C-terminus: 2,3-bisphosphoglycerate-independent phosphoglycerate mutase (515 aa).

The Mn(2+) site is built by Asp14 and Ser63. The active site involves Ser63. Substrate-binding positions include His124, Arg154–Asp155, Arg186, Arg192, Arg259–Arg262, and Lys334. Mn(2+) contacts are provided by Asp401, His405, Asp442, His443, and His460.

This sequence belongs to the BPG-independent phosphoglycerate mutase family. The cofactor is Mg(2+). It depends on Mn(2+) as a cofactor.

The catalysed reaction is (2R)-2-phosphoglycerate = (2R)-3-phosphoglycerate. It functions in the pathway carbohydrate degradation; glycolysis; pyruvate from D-glyceraldehyde 3-phosphate: step 3/5. With respect to regulation, activity is not affected by 2,3-bisphosphoglycerate. In terms of biological role, catalyzes the interconversion of 2-phosphoglycerate and 3-phosphoglycerate. In Onchocerca volvulus, this protein is 2,3-bisphosphoglycerate-independent phosphoglycerate mutase.